Consider the following 507-residue polypeptide: Alkyl hydroperoxide reductase subunit F (507 aa).

207–222 (DVLIVGGGPASGSAAI) provides a ligand contact to FAD. A disulfide bridge links C335 with C338. Residue 347-361 (DVAVIGGGNSGVEAA) participates in NAD(+) binding. 467 to 477 (TNVPGIFAAGD) lines the FAD pocket.

It belongs to the class-II pyridine nucleotide-disulfide oxidoreductase family. In terms of assembly, homodimer. FAD is required as a cofactor.

Serves to protect the cell against DNA damage by alkyl hydroperoxides. It can use either NADH or NADPH as electron donor for direct reduction of redox dyes or of alkyl hydroperoxides when combined with the AhpC protein. The chain is Alkyl hydroperoxide reductase subunit F (ahpF) from Staphylococcus aureus (strain NCTC 8325 / PS 47).